Consider the following 524-residue polypeptide: GMP synthase [glutamine-hydrolyzing] (524 aa).

One can recognise a Glutamine amidotransferase type-1 domain in the interval 9 to 207 (RILILDFGSQ…VIHICQCIPN (199 aa)). Residue C86 is the Nucleophile of the active site. Residues H181 and E183 contribute to the active site. One can recognise a GMPS ATP-PPase domain in the interval 208-399 (WTTKHIIEDS…LGLPADLIYR (192 aa)). 235–241 (SGGVDSA) contributes to the ATP binding site.

Homodimer.

It catalyses the reaction XMP + L-glutamine + ATP + H2O = GMP + L-glutamate + AMP + diphosphate + 2 H(+). It functions in the pathway purine metabolism; GMP biosynthesis; GMP from XMP (L-Gln route): step 1/1. Its function is as follows. Catalyzes the synthesis of GMP from XMP. This Coxiella burnetii (strain RSA 493 / Nine Mile phase I) protein is GMP synthase [glutamine-hydrolyzing].